The following is a 149-amino-acid chain: SsrA-binding protein (149 aa).

It belongs to the SmpB family.

It localises to the cytoplasm. Required for rescue of stalled ribosomes mediated by trans-translation. Binds to transfer-messenger RNA (tmRNA), required for stable association of tmRNA with ribosomes. tmRNA and SmpB together mimic tRNA shape, replacing the anticodon stem-loop with SmpB. tmRNA is encoded by the ssrA gene; the 2 termini fold to resemble tRNA(Ala) and it encodes a 'tag peptide', a short internal open reading frame. During trans-translation Ala-aminoacylated tmRNA acts like a tRNA, entering the A-site of stalled ribosomes, displacing the stalled mRNA. The ribosome then switches to translate the ORF on the tmRNA; the nascent peptide is terminated with the 'tag peptide' encoded by the tmRNA and targeted for degradation. The ribosome is freed to recommence translation, which seems to be the essential function of trans-translation. The protein is SsrA-binding protein of Anaplasma phagocytophilum (strain HZ).